The chain runs to 1218 residues: Coatomer subunit alpha-2 (1218 aa).

8 WD repeats span residues 7–48 (TKSN…DRFD), 49–88 (EHEGPVRGVHFHNSQPLFVSGGDDYKIKVWNYKTHRCLFT), 91–132 (GHLD…SVLT), 133–172 (GHNHYVMCASFHPKEDLVVSASLDQTVRVWDIGALKKKSA), 202–241 (GHDRGVNWASFHPTLPLIVSGADDRQVKLWRMNETKAWEV), 246–285 (GHMNNVSSVMFHAKQDIIVSNSEDKSIRVWDATKRTGIQT), 288–326 (REHDRFWILAVHPEINLLAAGHDNGMIVFKLERERPAFA), and 363–404 (SLNQ…VGRS). Positions 826 to 849 (NRGAVDEEEEDVEGDWGEGLDKFD) are disordered. The segment covering 831–843 (DEEEEDVEGDWGE) has biased composition (acidic residues).

As to quaternary structure, oligomeric complex that consists of at least the alpha, beta, beta', gamma, delta, epsilon and zeta subunits.

The protein resides in the cytoplasm. It is found in the golgi apparatus membrane. Its subcellular location is the cytoplasmic vesicle. The protein localises to the COPI-coated vesicle membrane. In terms of biological role, the coatomer is a cytosolic protein complex that binds to dilysine motifs and reversibly associates with Golgi non-clathrin-coated vesicles, which further mediate biosynthetic protein transport from the ER, via the Golgi up to the trans Golgi network. Coatomer complex is required for budding from Golgi membranes, and is essential for the retrograde Golgi-to-ER transport of dilysine-tagged proteins. The chain is Coatomer subunit alpha-2 from Arabidopsis thaliana (Mouse-ear cress).